The sequence spans 317 residues: ATP synthase gamma chain (317 aa).

This sequence belongs to the ATPase gamma chain family. F-type ATPases have 2 components, CF(1) - the catalytic core - and CF(0) - the membrane proton channel. CF(1) has five subunits: alpha(3), beta(3), gamma(1), delta(1), epsilon(1). CF(0) has three main subunits: a, b and c.

Its subcellular location is the cellular thylakoid membrane. Functionally, produces ATP from ADP in the presence of a proton gradient across the membrane. The gamma chain is believed to be important in regulating ATPase activity and the flow of protons through the CF(0) complex. The chain is ATP synthase gamma chain from Acaryochloris marina (strain MBIC 11017).